A 190-amino-acid polypeptide reads, in one-letter code: Ribose 1,5-bisphosphate phosphokinase PhnN (190 aa).

11–18 (GPSGSGKD) is a binding site for ATP.

It belongs to the ribose 1,5-bisphosphokinase family.

The enzyme catalyses alpha-D-ribose 1,5-bisphosphate + ATP = 5-phospho-alpha-D-ribose 1-diphosphate + ADP. The protein operates within metabolic intermediate biosynthesis; 5-phospho-alpha-D-ribose 1-diphosphate biosynthesis; 5-phospho-alpha-D-ribose 1-diphosphate from D-ribose 5-phosphate (route II): step 3/3. Its function is as follows. Catalyzes the phosphorylation of ribose 1,5-bisphosphate to 5-phospho-D-ribosyl alpha-1-diphosphate (PRPP). The sequence is that of Ribose 1,5-bisphosphate phosphokinase PhnN from Thiobacillus denitrificans (strain ATCC 25259 / T1).